The sequence spans 71 residues: Small ribosomal subunit protein bS21 (71 aa).

Residues 34–44 show a composition bias toward basic and acidic residues; the sequence is RREHYEKPTSE. The segment at 34-71 is disordered; it reads RREHYEKPTSERKRKKAAAVKRHAKKLSRDNARRTRLY. Over residues 45 to 59 the composition is skewed to basic residues; sequence RKRKKAAAVKRHAKK. Over residues 60-71 the composition is skewed to basic and acidic residues; sequence LSRDNARRTRLY.

Belongs to the bacterial ribosomal protein bS21 family.

In Idiomarina loihiensis (strain ATCC BAA-735 / DSM 15497 / L2-TR), this protein is Small ribosomal subunit protein bS21.